The chain runs to 266 residues: 4-hydroxy-tetrahydrodipicolinate reductase (266 aa).

Residue 10-15 (GPRGRM) coordinates NAD(+). Lys-38 contributes to the NADP(+) binding site. NAD(+) contacts are provided by residues 99–101 (GTT) and 125–128 (APNF). His-155 acts as the Proton donor/acceptor in catalysis. A (S)-2,3,4,5-tetrahydrodipicolinate-binding site is contributed by His-156. Lys-159 (proton donor) is an active-site residue. Residue 165 to 166 (GT) coordinates (S)-2,3,4,5-tetrahydrodipicolinate.

The protein belongs to the DapB family.

The protein localises to the cytoplasm. The enzyme catalyses (S)-2,3,4,5-tetrahydrodipicolinate + NAD(+) + H2O = (2S,4S)-4-hydroxy-2,3,4,5-tetrahydrodipicolinate + NADH + H(+). The catalysed reaction is (S)-2,3,4,5-tetrahydrodipicolinate + NADP(+) + H2O = (2S,4S)-4-hydroxy-2,3,4,5-tetrahydrodipicolinate + NADPH + H(+). It functions in the pathway amino-acid biosynthesis; L-lysine biosynthesis via DAP pathway; (S)-tetrahydrodipicolinate from L-aspartate: step 4/4. In terms of biological role, catalyzes the conversion of 4-hydroxy-tetrahydrodipicolinate (HTPA) to tetrahydrodipicolinate. This chain is 4-hydroxy-tetrahydrodipicolinate reductase, found in Bacillus cereus (strain Q1).